The chain runs to 257 residues: Global transcriptional regulator CodY (257 aa).

The interval 1-155 (MSLLSKTREL…AATVIGMEIL (155 aa)) is GAF domain. The GTP site is built by valine 22, phenylalanine 24, serine 43, arginine 44, arginine 45, and lysine 47. L-isoleucine is bound by residues arginine 61, threonine 96, and phenylalanine 98. The GTP site is built by glutamate 153 and lysine 158. A DNA-binding region (H-T-H motif) is located at residues 203 to 222 (ASKVADRVGITRSVIVNALR).

Belongs to the CodY family. As to quaternary structure, homodimer. Homotetramer. May form homodimers under conditions in which energy sources are sufficient (active state) and homotetramers under insufficient nutrient conditions (inactive state).

Its subcellular location is the cytoplasm. With respect to regulation, activity of CodY is modulated by interaction with two types of effectors: the branched-chain amino acids (BCAAs) leucine, isoleucine and valine, which are signals of the nutritional status of the cell, and GTP, which may signal the energetic status of the cell. In terms of biological role, DNA-binding global transcriptional regulator which is involved in the adaptive response to starvation and acts by directly or indirectly controlling the expression of numerous genes in response to nutrient availability. During rapid exponential growth, CodY is highly active and represses genes whose products allow adaptation to nutrient depletion. This Staphylococcus aureus (strain Mu3 / ATCC 700698) protein is Global transcriptional regulator CodY.